The primary structure comprises 310 residues: Olfactory receptor 5H14 (310 aa).

Residues 1–28 (MEEENATLLTEFVLTGFLYQPQWKIPLF) lie on the Extracellular side of the membrane. An N-linked (GlcNAc...) asparagine glycan is attached at asparagine 5. Residues 29-49 (LAFLVIYLITIMGNLGLIAVI) traverse the membrane as a helical segment. Over 50–56 (WKDPHLH) the chain is Cytoplasmic. Residues 57-77 (IPMYLLLGNLAFVDALLSSSV) traverse the membrane as a helical segment. Residues 78 to 98 (TLKMLINFLAKSKMISLSECK) are Extracellular-facing. Cysteine 97 and cysteine 179 form a disulfide bridge. Residues 99–119 (IQLFSFAISVTTECFLLATMA) form a helical membrane-spanning segment. Over 120-143 (YDRYVAICKPLLYPAIMTNGLCIR) the chain is Cytoplasmic. A helical transmembrane segment spans residues 144–164 (LLILSYVGGLLHALIHEGFLF). The Extracellular portion of the chain corresponds to 165–195 (RLTFCNSNIIQHFYCDIIPLLKISYTDSSIN). The helical transmembrane segment at 196–216 (FLMVFIFAGSIQVFTIGTVLI) threads the bilayer. Topologically, residues 217–240 (SYIFVLYTILKKKSVKGMRKAFST) are cytoplasmic. The chain crosses the membrane as a helical span at residues 241–261 (CGAHLLSVSLYYGPLAFMYMG). Over 262–271 (SASPQADDQD) the chain is Extracellular. A helical membrane pass occupies residues 272 to 292 (MMESLFYTVIVPLLNPMIYSL). The Cytoplasmic segment spans residues 293 to 310 (RNKQVIASFTKMFKRNDV).

It belongs to the G-protein coupled receptor 1 family.

The protein localises to the cell membrane. Odorant receptor. In Homo sapiens (Human), this protein is Olfactory receptor 5H14 (OR5H14).